A 359-amino-acid chain; its full sequence is RNA-binding protein 4B (359 aa).

RRM domains follow at residues 2-72 (VKLF…ASKN) and 78-148 (TKLH…LSTS). Residues 160 to 177 (SGCYRCGKEGHWSKECPV) form a CCHC-type zinc finger. The interval 196-359 (AVRPPYTMGY…YVDRARYSAF (164 aa)) is interaction with TNPO3.

In terms of assembly, interacts with TNPO3, which may mediate nuclear import of the protein.

Its subcellular location is the nucleus. The protein resides in the nucleolus. Required for the translational activation of PER1 mRNA in response to circadian clock. Binds directly to the 3'-UTR of the PER1 mRNA. This Sus scrofa (Pig) protein is RNA-binding protein 4B (RBM4B).